Consider the following 159-residue polypeptide: Protein E6 (159 aa).

2 zinc fingers span residues 35-71 and 108-144; these read CVYC…CGKC and CYIC…CMQC.

This sequence belongs to the papillomaviridae E6 protein family. Forms homodimers. Interacts with ubiquitin-protein ligase UBE3A/E6-AP; this interaction stimulates UBE3A ubiquitin activity. Interacts with host TP53 and EP300; this interaction inhibits TP53 activity.

The protein resides in the host cytoplasm. It localises to the host nucleus. Plays a major role in the induction and maintenance of cellular transformation. E6 associates with host UBE3A/E6-AP ubiquitin-protein ligase and modulates its activity. Sequesters tumor suppressor TP53 in the host cytoplasm and modulates its activity by interacting with host EP300 that results in the reduction of TP53 acetylation and activation. In turn, apoptosis induced by DNA damage is inhibited. E6 also protects host keratinocytes from apoptosis by mediating the degradation of host BAK1. May also inhibit host immune response. In Homo sapiens (Human), this protein is Protein E6.